The following is a 450-amino-acid chain: Glucose-6-phosphate isomerase (450 aa).

Residue Glu289 is the Proton donor of the active site. Catalysis depends on residues His310 and Lys424.

Belongs to the GPI family.

It localises to the cytoplasm. The enzyme catalyses alpha-D-glucose 6-phosphate = beta-D-fructose 6-phosphate. Its pathway is carbohydrate biosynthesis; gluconeogenesis. It participates in carbohydrate degradation; glycolysis; D-glyceraldehyde 3-phosphate and glycerone phosphate from D-glucose: step 2/4. Functionally, catalyzes the reversible isomerization of glucose-6-phosphate to fructose-6-phosphate. The sequence is that of Glucose-6-phosphate isomerase from Leptospira biflexa serovar Patoc (strain Patoc 1 / Ames).